We begin with the raw amino-acid sequence, 484 residues long: tRNA sulfurtransferase (484 aa).

The region spanning 56–158 (NCLKKALSKV…GNRAYFYTEV (103 aa)) is the THUMP domain. Residues 176–177 (LV), Lys257, Gly279, and Gln288 contribute to the ATP site. A disulfide bridge links Cys336 with Cys444. Residues 396-479 (APEGAVIVDL…TRNAVPPSSQ (84 aa)) enclose the Rhodanese domain. Cys444 serves as the catalytic Cysteine persulfide intermediate.

Belongs to the ThiI family.

Its subcellular location is the cytoplasm. It catalyses the reaction [ThiI sulfur-carrier protein]-S-sulfanyl-L-cysteine + a uridine in tRNA + 2 reduced [2Fe-2S]-[ferredoxin] + ATP + H(+) = [ThiI sulfur-carrier protein]-L-cysteine + a 4-thiouridine in tRNA + 2 oxidized [2Fe-2S]-[ferredoxin] + AMP + diphosphate. It carries out the reaction [ThiS sulfur-carrier protein]-C-terminal Gly-Gly-AMP + S-sulfanyl-L-cysteinyl-[cysteine desulfurase] + AH2 = [ThiS sulfur-carrier protein]-C-terminal-Gly-aminoethanethioate + L-cysteinyl-[cysteine desulfurase] + A + AMP + 2 H(+). It functions in the pathway cofactor biosynthesis; thiamine diphosphate biosynthesis. Catalyzes the ATP-dependent transfer of a sulfur to tRNA to produce 4-thiouridine in position 8 of tRNAs, which functions as a near-UV photosensor. Also catalyzes the transfer of sulfur to the sulfur carrier protein ThiS, forming ThiS-thiocarboxylate. This is a step in the synthesis of thiazole, in the thiamine biosynthesis pathway. The sulfur is donated as persulfide by IscS. The protein is tRNA sulfurtransferase of Pyrobaculum aerophilum (strain ATCC 51768 / DSM 7523 / JCM 9630 / CIP 104966 / NBRC 100827 / IM2).